A 616-amino-acid chain; its full sequence is Dihydroxy-acid dehydratase 1 (616 aa).

Residue Asp-81 coordinates Mg(2+). Position 122 (Cys-122) interacts with [2Fe-2S] cluster. Asp-123 and Lys-124 together coordinate Mg(2+). N6-carboxylysine is present on Lys-124. Cys-195 is a [2Fe-2S] cluster binding site. Position 491 (Glu-491) interacts with Mg(2+). Ser-517 functions as the Proton acceptor in the catalytic mechanism.

Belongs to the IlvD/Edd family. Homodimer. [2Fe-2S] cluster is required as a cofactor. Requires Mg(2+) as cofactor.

It catalyses the reaction (2R)-2,3-dihydroxy-3-methylbutanoate = 3-methyl-2-oxobutanoate + H2O. It carries out the reaction (2R,3R)-2,3-dihydroxy-3-methylpentanoate = (S)-3-methyl-2-oxopentanoate + H2O. The protein operates within amino-acid biosynthesis; L-isoleucine biosynthesis; L-isoleucine from 2-oxobutanoate: step 3/4. It functions in the pathway amino-acid biosynthesis; L-valine biosynthesis; L-valine from pyruvate: step 3/4. Functions in the biosynthesis of branched-chain amino acids. Catalyzes the dehydration of (2R,3R)-2,3-dihydroxy-3-methylpentanoate (2,3-dihydroxy-3-methylvalerate) into 2-oxo-3-methylpentanoate (2-oxo-3-methylvalerate) and of (2R)-2,3-dihydroxy-3-methylbutanoate (2,3-dihydroxyisovalerate) into 2-oxo-3-methylbutanoate (2-oxoisovalerate), the penultimate precursor to L-isoleucine and L-valine, respectively. The protein is Dihydroxy-acid dehydratase 1 of Bradyrhizobium diazoefficiens (strain JCM 10833 / BCRC 13528 / IAM 13628 / NBRC 14792 / USDA 110).